The primary structure comprises 283 residues: D-alanine aminotransferase (283 aa).

Tyr32 provides a ligand contact to substrate. Arg51 provides a ligand contact to pyridoxal 5'-phosphate. Substrate contacts are provided by Arg99 and His101. Residue Lys146 is the Proton acceptor of the active site. Position 146 is an N6-(pyridoxal phosphate)lysine (Lys146). Residue Glu178 participates in pyridoxal 5'-phosphate binding.

The protein belongs to the class-IV pyridoxal-phosphate-dependent aminotransferase family. Homodimer. Pyridoxal 5'-phosphate is required as a cofactor.

It catalyses the reaction D-alanine + 2-oxoglutarate = D-glutamate + pyruvate. Acts on the D-isomers of alanine, leucine, aspartate, glutamate, aminobutyrate, norvaline and asparagine. The enzyme transfers an amino group from a substrate D-amino acid to the pyridoxal phosphate cofactor to form pyridoxamine and an alpha-keto acid in the first half-reaction. The second-half reaction is the reverse of the first, transferring the amino group from the pyridoxamine to a second alpha-keto acid to form the product D-amino acid via a ping-pong mechanism. This is an important process in the formation of D-alanine and D-glutamate, which are essential bacterial cell wall components. The protein is D-alanine aminotransferase (dat) of Bacillus sp. (strain YM-1).